A 414-amino-acid chain; its full sequence is Tyrosine--tRNA ligase (414 aa).

Tyr40 provides a ligand contact to L-tyrosine. The 'HIGH' region motif lies at 45 to 54 (ATAASLHVGH). L-tyrosine is bound by residues Tyr175 and Gln179. The short motif at 235-239 (KMGKS) is the 'KMSKS' region element. Lys238 contributes to the ATP binding site. One can recognise an S4 RNA-binding domain in the interval 349 to 414 (LTVVQLLAQT…KKKHRMVQLG (66 aa)).

This sequence belongs to the class-I aminoacyl-tRNA synthetase family. TyrS type 1 subfamily. In terms of assembly, homodimer.

Its subcellular location is the cytoplasm. It catalyses the reaction tRNA(Tyr) + L-tyrosine + ATP = L-tyrosyl-tRNA(Tyr) + AMP + diphosphate + H(+). Its function is as follows. Catalyzes the attachment of tyrosine to tRNA(Tyr) in a two-step reaction: tyrosine is first activated by ATP to form Tyr-AMP and then transferred to the acceptor end of tRNA(Tyr). This Paracoccus denitrificans (strain Pd 1222) protein is Tyrosine--tRNA ligase.